We begin with the raw amino-acid sequence, 479 residues long: tRNA-dihydrouridine(20) synthase [NAD(P)+] (479 aa).

Residues 14–16 (PMV) and glutamine 87 each bind FMN. Residue cysteine 116 is the Proton donor of the active site. Residues lysine 159, histidine 187, 221 to 223 (NGD), and 245 to 246 (AR) contribute to the FMN site.

This sequence belongs to the Dus family. Dus2 subfamily. FMN serves as cofactor.

The protein localises to the cytoplasm. Its subcellular location is the nucleus. The catalysed reaction is 5,6-dihydrouridine(20) in tRNA + NADP(+) = uridine(20) in tRNA + NADPH + H(+). The enzyme catalyses 5,6-dihydrouridine(20) in tRNA + NAD(+) = uridine(20) in tRNA + NADH + H(+). It carries out the reaction a 5,6-dihydrouridine in mRNA + NAD(+) = a uridine in mRNA + NADH + H(+). It catalyses the reaction a 5,6-dihydrouridine in mRNA + NADP(+) = a uridine in mRNA + NADPH + H(+). Its function is as follows. Catalyzes the NADPH-dependent synthesis of dihydrouridine, a modified base found in the D-loop of most tRNAs. Specifically modifies U20 in cytoplasmic tRNAs. Also able to mediate dihydrouridylation of some mRNAs, thereby affecting their translation. The polypeptide is tRNA-dihydrouridine(20) synthase [NAD(P)+] (Schizosaccharomyces pombe (strain 972 / ATCC 24843) (Fission yeast)).